The chain runs to 366 residues: MNNVILYCRPGFEKECSAEVTEKAAAREIFGFARVKDNSGYVVFVCYQHEEADRLVRVLPLRSLIFARQMILVGELLRDLPAEDRITQIAGMLTGAVAGAGEVRVEVPDTNESKELMKFCRKLTVPLRAALRAQRILKGEEHRSPQVIHVLFIAPGCCYAGYSYRDNHSPFYMGIPRLRFPPDAPSRSMLKLEEAFHVFIPADEWDERLGSGMYAVDLGACPGGWTYQLVKRSMMVHAVDNGTMDEALMATGQVIHHRADGFRFEPPRNNVYWLVCDMVEKPSRVAQLAADWLVKGWCREAIFNLKLPMKKRYEEVSQNLRLLIDHLQVNGVHGEVHAKQLYHDREEVTVHARRFWSAVPGRRDER.

Residues Ser188, 221-224, Asp240, Asp260, and Asp277 contribute to the S-adenosyl-L-methionine site; that span reads CPGG. Lys306 functions as the Proton acceptor in the catalytic mechanism.

Belongs to the class I-like SAM-binding methyltransferase superfamily. RNA methyltransferase RlmE family. RlmM subfamily. Monomer.

It localises to the cytoplasm. The catalysed reaction is cytidine(2498) in 23S rRNA + S-adenosyl-L-methionine = 2'-O-methylcytidine(2498) in 23S rRNA + S-adenosyl-L-homocysteine + H(+). Catalyzes the 2'-O-methylation at nucleotide C2498 in 23S rRNA. This is Ribosomal RNA large subunit methyltransferase M from Sodalis glossinidius (strain morsitans).